The chain runs to 219 residues: Phosphatidylserine decarboxylase proenzyme (219 aa).

S188 functions as the Schiff-base intermediate with substrate; via pyruvic acid in the catalytic mechanism. The residue at position 188 (S188) is a Pyruvic acid (Ser); by autocatalysis.

The protein belongs to the phosphatidylserine decarboxylase family. PSD-A subfamily. Heterodimer of a large membrane-associated beta subunit and a small pyruvoyl-containing alpha subunit. The cofactor is pyruvate. Post-translationally, is synthesized initially as an inactive proenzyme. Formation of the active enzyme involves a self-maturation process in which the active site pyruvoyl group is generated from an internal serine residue via an autocatalytic post-translational modification. Two non-identical subunits are generated from the proenzyme in this reaction, and the pyruvate is formed at the N-terminus of the alpha chain, which is derived from the carboxyl end of the proenzyme. The post-translation cleavage follows an unusual pathway, termed non-hydrolytic serinolysis, in which the side chain hydroxyl group of the serine supplies its oxygen atom to form the C-terminus of the beta chain, while the remainder of the serine residue undergoes an oxidative deamination to produce ammonia and the pyruvoyl prosthetic group on the alpha chain.

The protein resides in the cell membrane. It carries out the reaction a 1,2-diacyl-sn-glycero-3-phospho-L-serine + H(+) = a 1,2-diacyl-sn-glycero-3-phosphoethanolamine + CO2. It participates in phospholipid metabolism; phosphatidylethanolamine biosynthesis; phosphatidylethanolamine from CDP-diacylglycerol: step 2/2. Its function is as follows. Catalyzes the formation of phosphatidylethanolamine (PtdEtn) from phosphatidylserine (PtdSer). The protein is Phosphatidylserine decarboxylase proenzyme of Citrifermentans bemidjiense (strain ATCC BAA-1014 / DSM 16622 / JCM 12645 / Bem) (Geobacter bemidjiensis).